Here is a 692-residue protein sequence, read N- to C-terminus: ATP-dependent RNA helicase MSS116, mitochondrial (692 aa).

A mitochondrion-targeting transit peptide spans 1–37 (MMIARFGKQVLRKNVLVSNRIHFPVISRGFHNSFINK). The interval 82–113 (SQVTEQTELTKSEEEEKKKKNINTNTNKNDRK) is disordered. Basic and acidic residues predominate over residues 89 to 99 (ELTKSEEEEKK). The short motif at 130–158 (DFKNTGLIDDVILRALDRAHFKDLTPIQQ) is the Q motif element. One can recognise a Helicase ATP-binding domain in the interval 162 to 349 (VPLLETERGM…KQHINKKYDY (188 aa)). 175–182 (AKTGTGKT) provides a ligand contact to ATP. Positions 290 to 293 (DEAD) match the DEAD box motif. The region spanning 384-534 (YVNQLVKDSP…QVHESSEIDN (151 aa)) is the Helicase C-terminal domain. The interval 643–692 (NRYSGGGGNRSEKRFSFAGRGGNSGGHSGRGRGGRSGYSGGRSSQYSDWE) is disordered. Over residues 661-670 (GRGGNSGGHS) the composition is skewed to gly residues.

It belongs to the DEAD box helicase family. DDX18/HAS1 subfamily.

It localises to the mitochondrion matrix. It carries out the reaction ATP + H2O = ADP + phosphate + H(+). In terms of biological role, ATP-dependent RNA helicase required for mitochondrial splicing of group I and II introns. Also required for efficient mitochondrial translation. In Lodderomyces elongisporus (strain ATCC 11503 / CBS 2605 / JCM 1781 / NBRC 1676 / NRRL YB-4239) (Yeast), this protein is ATP-dependent RNA helicase MSS116, mitochondrial (MSS116).